The sequence spans 237 residues: Carboxy-S-adenosyl-L-methionine synthase (237 aa).

S-adenosyl-L-methionine is bound by residues Tyr-36, 61 to 63 (GAS), 86 to 87 (DN), 112 to 113 (DI), Asn-127, and Arg-194.

This sequence belongs to the class I-like SAM-binding methyltransferase superfamily. Cx-SAM synthase family. As to quaternary structure, homodimer.

The catalysed reaction is prephenate + S-adenosyl-L-methionine = carboxy-S-adenosyl-L-methionine + 3-phenylpyruvate + H2O. Catalyzes the conversion of S-adenosyl-L-methionine (SAM) to carboxy-S-adenosyl-L-methionine (Cx-SAM). The polypeptide is Carboxy-S-adenosyl-L-methionine synthase (Ruthia magnifica subsp. Calyptogena magnifica).